Reading from the N-terminus, the 1189-residue chain is Pyruvate carboxylase (1189 aa).

The 453-residue stretch at 21–473 folds into the Biotin carboxylation domain; the sequence is TMNKILVANR…WTTFIDDTPE (453 aa). ATP-binding residues include Lys139, Glu223, and His258. An ATP-grasp domain is found at 143–340; it reads RNLAYAANVP…IVAAQIQIAA (198 aa). Arg315 is an active-site residue. The Pyruvate carboxyltransferase domain maps to 559–826; it reads LMIMDTTWRD…ETGIPEANAR (268 aa). Residues 567–571 and Arg640 contribute to the substrate site; that span reads RDAHQ. Asp568 is a binding site for a divalent metal cation. A divalent metal cation contacts are provided by Lys736, His766, and His768. Lys736 is subject to N6-carboxylysine. Thr900 contributes to the substrate binding site. The Biotinyl-binding domain occupies 1099–1174; that stretch reads KADAHNPNEI…DASDLIPKSS (76 aa). Lys1140 bears the N6-biotinyllysine mark.

It depends on biotin as a cofactor. The cofactor is Zn(2+).

The protein resides in the cytoplasm. The enzyme catalyses hydrogencarbonate + pyruvate + ATP = oxaloacetate + ADP + phosphate + H(+). Its pathway is carbohydrate biosynthesis; gluconeogenesis. Functionally, pyruvate carboxylase catalyzes a 2-step reaction, involving the ATP-dependent carboxylation of the covalently attached biotin in the first step and the transfer of the carboxyl group to pyruvate in the second. The sequence is that of Pyruvate carboxylase (PYC1) from Komagataella pastoris (Yeast).